Consider the following 54-residue polypeptide: uncharacterized protein (54 aa).

The protein to B.subtilis XkdX.

This is an uncharacterized protein from Bacillus subtilis (strain 168).